Here is a 218-residue protein sequence, read N- to C-terminus: Glycerol-3-phosphate acyltransferase (218 aa).

5 helical membrane-spanning segments follow: residues 4–24 (IALGMIIFAYLCGSISSAILI), 54–74 (TAAIVLICDVLKGMIPVWLAY), 80–100 (PFYLGITAIAACLGHIYPIFF), 107–127 (GVATAFGAIAAIGWDLTGLMM), and 130–150 (WLLTILLSGYSSLGAIVSALI).

This sequence belongs to the PlsY family. In terms of assembly, probably interacts with PlsX.

It is found in the cell inner membrane. The enzyme catalyses an acyl phosphate + sn-glycerol 3-phosphate = a 1-acyl-sn-glycero-3-phosphate + phosphate. Its pathway is lipid metabolism; phospholipid metabolism. Its function is as follows. Catalyzes the transfer of an acyl group from acyl-phosphate (acyl-PO(4)) to glycerol-3-phosphate (G3P) to form lysophosphatidic acid (LPA). This enzyme utilizes acyl-phosphate as fatty acyl donor, but not acyl-CoA or acyl-ACP. The chain is Glycerol-3-phosphate acyltransferase from Photorhabdus laumondii subsp. laumondii (strain DSM 15139 / CIP 105565 / TT01) (Photorhabdus luminescens subsp. laumondii).